The primary structure comprises 382 residues: Dual-specificity RNA methyltransferase RlmN (382 aa).

E94 serves as the catalytic Proton acceptor. In terms of domain architecture, Radical SAM core spans 100 to 336 (EANRGTLCVS…NTITRKTRGD (237 aa)). A disulfide bridge connects residues C107 and C342. The [4Fe-4S] cluster site is built by C114, C118, and C121. S-adenosyl-L-methionine-binding positions include 168 to 169 (GE), S200, 222 to 224 (SLH), and N299. Residue C342 is the S-methylcysteine intermediate of the active site.

Belongs to the radical SAM superfamily. RlmN family. It depends on [4Fe-4S] cluster as a cofactor.

It is found in the cytoplasm. The catalysed reaction is adenosine(2503) in 23S rRNA + 2 reduced [2Fe-2S]-[ferredoxin] + 2 S-adenosyl-L-methionine = 2-methyladenosine(2503) in 23S rRNA + 5'-deoxyadenosine + L-methionine + 2 oxidized [2Fe-2S]-[ferredoxin] + S-adenosyl-L-homocysteine. The enzyme catalyses adenosine(37) in tRNA + 2 reduced [2Fe-2S]-[ferredoxin] + 2 S-adenosyl-L-methionine = 2-methyladenosine(37) in tRNA + 5'-deoxyadenosine + L-methionine + 2 oxidized [2Fe-2S]-[ferredoxin] + S-adenosyl-L-homocysteine. Specifically methylates position 2 of adenine 2503 in 23S rRNA and position 2 of adenine 37 in tRNAs. m2A2503 modification seems to play a crucial role in the proofreading step occurring at the peptidyl transferase center and thus would serve to optimize ribosomal fidelity. This Legionella pneumophila (strain Paris) protein is Dual-specificity RNA methyltransferase RlmN.